A 358-amino-acid chain; its full sequence is tRNA-specific 2-thiouridylase MnmA (358 aa).

ATP contacts are provided by residues 6–13 (ALSGGVDS) and Met32. The active-site Nucleophile is the Cys103. Residues Cys103 and Cys201 are joined by a disulfide bond. Residue Gly127 coordinates ATP. Positions 151–153 (KDQ) are interaction with tRNA. Residue Cys201 is the Cysteine persulfide intermediate of the active site.

This sequence belongs to the MnmA/TRMU family.

The protein localises to the cytoplasm. The catalysed reaction is S-sulfanyl-L-cysteinyl-[protein] + uridine(34) in tRNA + AH2 + ATP = 2-thiouridine(34) in tRNA + L-cysteinyl-[protein] + A + AMP + diphosphate + H(+). In terms of biological role, catalyzes the 2-thiolation of uridine at the wobble position (U34) of tRNA, leading to the formation of s(2)U34. This chain is tRNA-specific 2-thiouridylase MnmA, found in Thermotoga neapolitana (strain ATCC 49049 / DSM 4359 / NBRC 107923 / NS-E).